The sequence spans 234 residues: 2-C-methyl-D-erythritol 4-phosphate cytidylyltransferase (234 aa).

Belongs to the IspD/TarI cytidylyltransferase family. IspD subfamily.

It catalyses the reaction 2-C-methyl-D-erythritol 4-phosphate + CTP + H(+) = 4-CDP-2-C-methyl-D-erythritol + diphosphate. The protein operates within isoprenoid biosynthesis; isopentenyl diphosphate biosynthesis via DXP pathway; isopentenyl diphosphate from 1-deoxy-D-xylulose 5-phosphate: step 2/6. In terms of biological role, catalyzes the formation of 4-diphosphocytidyl-2-C-methyl-D-erythritol from CTP and 2-C-methyl-D-erythritol 4-phosphate (MEP). The polypeptide is 2-C-methyl-D-erythritol 4-phosphate cytidylyltransferase (Pseudomonas aeruginosa (strain ATCC 15692 / DSM 22644 / CIP 104116 / JCM 14847 / LMG 12228 / 1C / PRS 101 / PAO1)).